Consider the following 289-residue polypeptide: Probable porphobilinogen deaminase (289 aa).

C234 is modified (S-(dipyrrolylmethanemethyl)cysteine).

Belongs to the HMBS family. Dipyrromethane is required as a cofactor.

It catalyses the reaction 4 porphobilinogen + H2O = hydroxymethylbilane + 4 NH4(+). It functions in the pathway porphyrin-containing compound metabolism; protoporphyrin-IX biosynthesis; coproporphyrinogen-III from 5-aminolevulinate: step 2/4. Its function is as follows. Tetrapolymerization of the monopyrrole PBG into the hydroxymethylbilane pre-uroporphyrinogen in several discrete steps. This chain is Probable porphobilinogen deaminase (hemC), found in Archaeoglobus fulgidus (strain ATCC 49558 / DSM 4304 / JCM 9628 / NBRC 100126 / VC-16).